The primary structure comprises 31 residues: MVTLISYISLLAGFVIIASVFYLALVKIKLI.

Residues 4–24 (LISYISLLAGFVIIASVFYLA) form a helical membrane-spanning segment.

This sequence belongs to the PetL family. As to quaternary structure, the 4 large subunits of the cytochrome b6-f complex are cytochrome b6, subunit IV (17 kDa polypeptide, PetD), cytochrome f and the Rieske protein, while the 4 small subunits are PetG, PetL, PetM and PetN. The complex functions as a dimer.

The protein localises to the plastid. It is found in the chloroplast thylakoid membrane. Its function is as follows. Component of the cytochrome b6-f complex, which mediates electron transfer between photosystem II (PSII) and photosystem I (PSI), cyclic electron flow around PSI, and state transitions. PetL is important for photoautotrophic growth as well as for electron transfer efficiency and stability of the cytochrome b6-f complex. This chain is Cytochrome b6-f complex subunit 6, found in Tupiella akineta (Green alga).